We begin with the raw amino-acid sequence, 298 residues long: ATP synthase gamma chain (298 aa).

This sequence belongs to the ATPase gamma chain family. As to quaternary structure, F-type ATPases have 2 components, CF(1) - the catalytic core - and CF(0) - the membrane proton channel. CF(1) has five subunits: alpha(3), beta(3), gamma(1), delta(1), epsilon(1). CF(0) has three main subunits: a, b and c.

It localises to the cell membrane. Its function is as follows. Produces ATP from ADP in the presence of a proton gradient across the membrane. The gamma chain is believed to be important in regulating ATPase activity and the flow of protons through the CF(0) complex. This is ATP synthase gamma chain from Mycobacterium leprae (strain Br4923).